A 324-amino-acid chain; its full sequence is MTGIKTTGEKKMMFFSGRAHPELAEEVAQQLGVGVVPTKAFDFANGEIYVRYQESARGADCFLIQSHTAPINKWVMEQLIMIDALKRASARSITVIVPFYGYARQDKKHRGREPISARLIADLMKTAGADRILAVDLHTDQIQGFFDGPVDHLFALPLLADYVGAKVDRSKLTVVSPDAGRVRVADRWCDRLGAPLAIVHKRRDKDVANQVTVHEVVGDVKGRICVLVDDMIDTGGTICAAADALFAHGAEDVIVTATHGVLSGPAADRLKNSKVSEFVFTNTLPSASELELDKITVLSIAPTIARAVREVFEDGSVTSLFDEQ.

Residues Asn45–Glu47 and Arg104–Gln105 each bind ATP. Mg(2+)-binding residues include His138 and Asp178. The active site involves Lys201. D-ribose 5-phosphate contacts are provided by residues Arg203, Asp229, and Asp233 to Thr237.

This sequence belongs to the ribose-phosphate pyrophosphokinase family. Class I subfamily. In terms of assembly, homohexamer. Requires Mg(2+) as cofactor.

Its subcellular location is the cytoplasm. The enzyme catalyses D-ribose 5-phosphate + ATP = 5-phospho-alpha-D-ribose 1-diphosphate + AMP + H(+). It functions in the pathway metabolic intermediate biosynthesis; 5-phospho-alpha-D-ribose 1-diphosphate biosynthesis; 5-phospho-alpha-D-ribose 1-diphosphate from D-ribose 5-phosphate (route I): step 1/1. Its function is as follows. Involved in the biosynthesis of the central metabolite phospho-alpha-D-ribosyl-1-pyrophosphate (PRPP) via the transfer of pyrophosphoryl group from ATP to 1-hydroxyl of ribose-5-phosphate (Rib-5-P). The protein is Ribose-phosphate pyrophosphokinase of Streptomyces coelicolor (strain ATCC BAA-471 / A3(2) / M145).